The sequence spans 174 residues: Co-chaperone protein HscB homolog (174 aa).

Positions 2–74 (NYFELFKFPP…IRRAEHMLSL (73 aa)) constitute a J domain.

This sequence belongs to the HscB family. As to quaternary structure, interacts with HscA and stimulates its ATPase activity.

Its function is as follows. Co-chaperone involved in the maturation of iron-sulfur cluster-containing proteins. Seems to help targeting proteins to be folded toward HscA. The chain is Co-chaperone protein HscB homolog from Shewanella baltica (strain OS195).